We begin with the raw amino-acid sequence, 360 residues long: Serine/threonine-protein kinase SRK2H (360 aa).

The 257-residue stretch at 4 to 260 folds into the Protein kinase domain; the sequence is YEVVKDLGAG…LKEIKKHPWY (257 aa). Residues 10 to 18 and K33 contribute to the ATP site; that span reads LGAGNFGVA. D123 serves as the catalytic Proton acceptor. Residues 298-360 are disordered; it reads EARNPAPSSN…AHSCQEPPKA (63 aa). The segment covering 313 to 343 has biased composition (acidic residues); the sequence is DDDEEDVEDEVEEEEEEEEEEEEEEEEEEDE. Basic and acidic residues predominate over residues 344–360; that stretch reads YEKHVKEAHSCQEPPKA.

It belongs to the protein kinase superfamily. Ser/Thr protein kinase family. In terms of tissue distribution, expressed in seedlings.

The enzyme catalyses L-seryl-[protein] + ATP = O-phospho-L-seryl-[protein] + ADP + H(+). It catalyses the reaction L-threonyl-[protein] + ATP = O-phospho-L-threonyl-[protein] + ADP + H(+). The polypeptide is Serine/threonine-protein kinase SRK2H (SRK2H) (Arabidopsis thaliana (Mouse-ear cress)).